Reading from the N-terminus, the 272-residue chain is ATP synthase subunit a (272 aa).

A run of 5 helical transmembrane segments spans residues 41-61 (TLNI…LALF), 102-122 (IAPL…MDLV), 147-167 (DVNI…FYSI), 212-232 (LFGN…LLPW), and 243-263 (AIFH…LTIV).

The protein belongs to the ATPase A chain family. F-type ATPases have 2 components, CF(1) - the catalytic core - and CF(0) - the membrane proton channel. CF(1) has five subunits: alpha(3), beta(3), gamma(1), delta(1), epsilon(1). CF(0) has three main subunits: a(1), b(2) and c(9-12). The alpha and beta chains form an alternating ring which encloses part of the gamma chain. CF(1) is attached to CF(0) by a central stalk formed by the gamma and epsilon chains, while a peripheral stalk is formed by the delta and b chains.

The protein localises to the cell inner membrane. In terms of biological role, key component of the proton channel; it plays a direct role in the translocation of protons across the membrane. This Edwardsiella ictaluri (strain 93-146) protein is ATP synthase subunit a.